The chain runs to 80 residues: Exodeoxyribonuclease 7 small subunit (80 aa).

It belongs to the XseB family. In terms of assembly, heterooligomer composed of large and small subunits.

The protein localises to the cytoplasm. The catalysed reaction is Exonucleolytic cleavage in either 5'- to 3'- or 3'- to 5'-direction to yield nucleoside 5'-phosphates.. Bidirectionally degrades single-stranded DNA into large acid-insoluble oligonucleotides, which are then degraded further into small acid-soluble oligonucleotides. This chain is Exodeoxyribonuclease 7 small subunit, found in Edwardsiella ictaluri (strain 93-146).